Consider the following 693-residue polypeptide: F-box protein MAX2 (693 aa).

Residues 3 to 50 (STTLSDLPDVILSTISSLVSDSRARNSLSLVSHKFLALERSTRSHLTI) enclose the F-box domain. 14 LRR repeats span residues 9 to 34 (LPDVILSTISSLVSDSRARNSLSLVS), 49 to 74 (TIRGNARDLSLVPDCFRSISHLDLSF), 75 to 100 (LSPWGHTLLASLPIDHQNLLALRLKF), 110 to 135 (VYTRSPSSLELLLPQWPRIRHIKLLR), 141 to 167 (SQIPTGGDFVPIFEHCGGFLESLDLSN), 168 to 196 (FYHWTEDLPPVLLRYADVAARLTRLDLLT), 200 to 225 (TEGYKSSEIVSITKSCPNLKTFRVAC), 232 to 257 (FEFVGDETLSAVATSSPKLTLLHMVD), 274 to 299 (DSAVTAGTLIEVFSGLPNLEELVLDV), 302 to 327 (DVKHSGVALEALNSKCKKLRVLKLGQ), 332 to 356 (CSATEWRRLDGVALCGGLQSLSIKN), 357 to 382 (SGDLTDMGLVAIGRGCCKLTTFEIQG), 383 to 409 (CENVTVDGLRTMVSLRSKTLTDVRISC), and 410 to 436 (CKNLDTAASLKAIEPICDRIKRLHIDC). The tract at residues 445–465 (EVEGRVETSEADHEEEDDGYE) is disordered. LRR repeat units lie at residues 480–505 (CSTSDVNGFCSEDRVWEKLEYLSLWI), 508–532 (GEFLTPLPMTGLDDCPNLEEIRIKI), 541–565 (RPAEPEFGLSCLALYPKLSKMQLDC), and 608–637 (DRDVNQRSLSLPGAGLLQECLTLRKLFIHG).

Part of a SCF (SKP1-cullin-F-box) protein ligase complex. Interacts with SKP1A/ASK1. Interacts with CUL1. Interacts with SMXL6, SMXL7 and SMXL8. Interacts with D14. Forms a complex with D14 and SKP1A/ASK1 in presence of strigolactone. Expressed in the vasculature of growing leaves and roots, rosette axillary bud, flowers, siliques, funiculi and stems.

Its subcellular location is the nucleus. It functions in the pathway protein modification; protein ubiquitination. Its function is as follows. Component of SCF(ASK-cullin-F-box) E3 ubiquitin ligase complexes, which may mediate the ubiquitination and subsequent proteasomal degradation of target proteins. Promotes the senescence. Is necessary for responses to strigolactones and karrikins. Contributes to the selective repression of axillary shoots and moderates the branching by regulating negatively the auxin transport in primary stems, in an AXR1-independent manner. Required for the progression of leaf senescence mediated by methyl jasmonate. Required at each node to suppress axillary bud growth. The protein is F-box protein MAX2 of Arabidopsis thaliana (Mouse-ear cress).